An 87-amino-acid polypeptide reads, in one-letter code: MRTLTLLTTLLLLALHTQAESPQGSTKEAPDEEQDISVFFGGDKGTALQDAAVKAGVTCSCRTSSCRFGERLSGACRLNGRIYRLCC.

The first 19 residues, 1–19 (MRTLTLLTTLLLLALHTQA), serve as a signal peptide directing secretion. Positions 20–58 (ESPQGSTKEAPDEEQDISVFFGGDKGTALQDAAVKAGVT) are excised as a propeptide. 3 disulfides stabilise this stretch: C59–C87, C61–C76, and C66–C86.

The protein belongs to the alpha-defensin family. As to expression, highest expression in bone marrow and to a much lesser extent in small intestine.

The protein resides in the secreted. In terms of biological role, active in vitro against S.aureus, fungi, Gram-positive and Gram-negative bacteria and to a lesser extent against an enveloped virus. This Rattus norvegicus (Rat) protein is Neutrophil antibiotic peptide NP-3A.